A 394-amino-acid polypeptide reads, in one-letter code: Endothelial cell-selective adhesion molecule (394 aa).

A signal peptide spans 1-29 (MILQAGTPETSLLRVLFLGLSTLAAFSRA). At 30-251 (QMELHVPPGL…LDVMTGSKAA (222 aa)) the chain is on the extracellular side. In terms of domain architecture, Ig-like V-type spans 37-146 (PGLNKLEAVE…EGKSIGHSIK (110 aa)). N-linked (GlcNAc...) asparagine glycans are attached at residues Asn-111, Asn-172, Asn-216, and Asn-239. The Ig-like C2-type domain maps to 159-243 (PSCSLQGVPY…GFAKCNVTLD (85 aa)). An intrachain disulfide couples Cys-177 to Cys-227. A helical membrane pass occupies residues 252–272 (VVAGAVVGTFVGLVLIAGLVL). Topologically, residues 273-394 (LYQRRSKTLE…PAQSQAGSLV (122 aa)) are cytoplasmic. Position 304 is a phosphoserine (Ser-304). 2 stretches are compositionally biased toward polar residues: residues 304–318 (SDTI…SVTS) and 335–347 (FTPT…QALS). Residues 304 to 372 (SDTISKNGTL…SLTPGGVSSS (69 aa)) are disordered. Phosphothreonine occurs at positions 336 and 338. 4 positions are modified to phosphoserine: Ser-340, Ser-343, Ser-348, and Ser-375.

Interacts with MAGI1. In terms of tissue distribution, highly expressed in the heart and lung. Weakly expressed in the kidney and skin. Expression is restricted to the vascular endothelial cells. Expressed in the kidney, heart and tongue (at protein level). Also expressed on megakaryocytes and activated platelets.

It is found in the cell junction. It localises to the adherens junction. The protein localises to the tight junction. Its subcellular location is the cell membrane. Can mediate aggregation most likely through a homophilic molecular interaction. This is Endothelial cell-selective adhesion molecule (Esam) from Mus musculus (Mouse).